A 169-amino-acid polypeptide reads, in one-letter code: Probable phospholipid hydroperoxide glutathione peroxidase (169 aa).

The active site involves cysteine 43.

It belongs to the glutathione peroxidase family.

It localises to the cytoplasm. It carries out the reaction a hydroperoxy polyunsaturated fatty acid + 2 glutathione = a hydroxy polyunsaturated fatty acid + glutathione disulfide + H2O. In terms of biological role, protects cells and enzymes from oxidative damage, by catalyzing the reduction of hydrogen peroxide, lipid peroxides and organic hydroperoxide, by glutathione. In Nicotiana tabacum (Common tobacco), this protein is Probable phospholipid hydroperoxide glutathione peroxidase.